Consider the following 131-residue polypeptide: Profilin-A (131 aa).

This sequence belongs to the profilin family. In terms of assembly, occurs in many kinds of cells as a complex with monomeric actin in a 1:1 ratio.

It is found in the cytoplasm. Its subcellular location is the cytoskeleton. Functionally, binds to actin and affects the structure of the cytoskeleton. At high concentrations, profilin prevents the polymerization of actin, whereas it enhances it at low concentrations. By binding to PIP2, it inhibits the formation of IP3 and DG. May serve as a modulator in pollen germination and pollen tube growth. The polypeptide is Profilin-A (Oryza sativa subsp. japonica (Rice)).